The sequence spans 342 residues: Dihydroorotase (342 aa).

Positions 13 and 15 each coordinate Zn(2+). Substrate-binding positions include 15 to 17 (HLR) and Asn41. Residues Lys98, His135, and His173 each contribute to the Zn(2+) site. Lys98 carries the post-translational modification N6-carboxylysine. A substrate-binding site is contributed by His135. Leu218 lines the substrate pocket. Asp246 serves as a coordination point for Zn(2+). Residue Asp246 is part of the active site. Residues His250 and Ala262 each contribute to the substrate site.

This sequence belongs to the metallo-dependent hydrolases superfamily. DHOase family. Class II DHOase subfamily. In terms of assembly, homodimer. Zn(2+) serves as cofactor.

The enzyme catalyses (S)-dihydroorotate + H2O = N-carbamoyl-L-aspartate + H(+). It participates in pyrimidine metabolism; UMP biosynthesis via de novo pathway; (S)-dihydroorotate from bicarbonate: step 3/3. Catalyzes the reversible cyclization of carbamoyl aspartate to dihydroorotate. This is Dihydroorotase from Aliivibrio salmonicida (strain LFI1238) (Vibrio salmonicida (strain LFI1238)).